The following is a 242-amino-acid chain: Protein HTATIP2 (242 aa).

Residue Ala2 is modified to N-acetylalanine. The required for interaction with elongation factor EEF1A1 stretch occupies residues Ala2–Gly25. Residues Ser27, Gly28, Glu29, Thr30, Arg52, Arg53, Leu92, Gly93, Tyr143, Lys147, Leu170, and Arg178 each contribute to the NADPH site. The Proton acceptor role is filled by Tyr143. Lys147 is an active-site residue.

In terms of assembly, monomer. Forms homodimers during oxidative stress. Interacts (via N-terminus) with elongation factor EEF1A1 (via middle-region); the interaction is direct and competes with EEF1A1 binding to guanyl-nucleotide exchange factor EEF1B2, thereby inhibiting GDP for GTP exchange and reactivation of EEF1A1. Interacts with nuclear transport receptors XPO4, IPO5/RANBP5, IPO7, IPO9 and KPNB1 as well as GCN1L1/GCN1 and LRPPRC probably through their HEAT repeats. Binds NCOA5/CIA.

Its subcellular location is the cytoplasm. Represses translation by preventing reactivation of elongation factor eEF1A. May also inhibit nuclear import by competing with nuclear import substrates for binding to a subset of nuclear transport receptors. Has additionally been proposed to act as a redox sensor involved in cellular oxidative stress surveillance. This chain is Protein HTATIP2 (HTATIP2), found in Gorilla gorilla gorilla (Western lowland gorilla).